Here is a 747-residue protein sequence, read N- to C-terminus: Protein Niban 2 (747 aa).

Glycine 2 is lipidated: N-myristoyl glycine. Residues 68–192 (RIIFSGNLFQ…WQAVLQDCVR (125 aa)) form the PH domain. Phosphoserine occurs at positions 568 and 574. The disordered stretch occupies residues 589–747 (WGEQYGDGGD…EDSAGVQTEF (159 aa)). Gly residues predominate over residues 593–602 (YGDGGDGSDS). Phosphoserine is present on residues serine 605, serine 626, serine 641, serine 645, serine 648, serine 667, serine 672, serine 683, serine 693, and serine 697. Residues 708 to 722 (VDLEPPKPSDQETGE) are compositionally biased toward basic and acidic residues. Residues 734 to 747 (HTTTEDSAGVQTEF) are compositionally biased toward polar residues.

The protein belongs to the Niban family. As apoptosis proceeds, degraded via an proteasome-independent pathway, probably by caspases.

It localises to the cytoplasm. The protein localises to the cytosol. The protein resides in the cell junction. It is found in the adherens junction. Its subcellular location is the membrane. In terms of biological role, may play a role in apoptosis suppression. This is Protein Niban 2 from Rattus norvegicus (Rat).